A 156-amino-acid chain; its full sequence is V-type sodium ATPase subunit K (156 aa).

4 helical membrane-spanning segments follow: residues 11–31, 60–80, 89–109, and 132–152; these read GMVFAVLAMATATIFSGIGSA, LLPGTQGLYGFVIAFLIFINL, GLNFLGASLPIAFTGLFSGIA, and IIFAAMVETYAILGFVISFLL.

This sequence belongs to the V-ATPase proteolipid subunit family. In terms of processing, the N-terminus is blocked.

It localises to the cell membrane. Its function is as follows. Involved in ATP-driven sodium extrusion. In Enterococcus hirae (strain ATCC 9790 / DSM 20160 / JCM 8729 / LMG 6399 / NBRC 3181 / NCIMB 6459 / NCDO 1258 / NCTC 12367 / WDCM 00089 / R), this protein is V-type sodium ATPase subunit K (ntpK).